The primary structure comprises 354 residues: Uroporphyrinogen decarboxylase (354 aa).

Residues 27–31, Asp77, Tyr154, Thr209, and His327 each bind substrate; that span reads RQAGR.

This sequence belongs to the uroporphyrinogen decarboxylase family. As to quaternary structure, homodimer.

The protein resides in the cytoplasm. The catalysed reaction is uroporphyrinogen III + 4 H(+) = coproporphyrinogen III + 4 CO2. The protein operates within porphyrin-containing compound metabolism; protoporphyrin-IX biosynthesis; coproporphyrinogen-III from 5-aminolevulinate: step 4/4. In terms of biological role, catalyzes the decarboxylation of four acetate groups of uroporphyrinogen-III to yield coproporphyrinogen-III. The polypeptide is Uroporphyrinogen decarboxylase (Escherichia coli O6:K15:H31 (strain 536 / UPEC)).